Here is a 325-residue protein sequence, read N- to C-terminus: Chain length determinant protein (325 aa).

At 1–31 the chain is on the cytoplasmic side; it reads MRVENNNVSGQNHDPEQIDLIDLLVQLWRGK. A helical membrane pass occupies residues 32–52; that stretch reads MTIIISVIVAIALAIGYLAVA. Residues 53–294 are Periplasmic-facing; sequence KEKWTSTAIV…LPIRRDSPKK (242 aa). Residues 295–315 form a helical membrane-spanning segment; sequence AITLILAVLLGGMVGAGIVLG. Residues 316 to 325 lie on the Cytoplasmic side of the membrane; sequence RNALRNYNAK.

The protein belongs to the WzzB/Cld/Rol family.

Its subcellular location is the cell inner membrane. Its pathway is bacterial outer membrane biogenesis; lipopolysaccharide biosynthesis. In terms of biological role, confers a modal distribution of chain length on the O-antigen component of lipopolysaccharide (LPS). Gives rise to a reduced number of short chain molecules and increases in numbers of longer molecules. The protein is Chain length determinant protein (wzzB) of Shigella dysenteriae.